The following is a 190-amino-acid chain: MEAETKTLPLENASILSEGSLQEGHRLWIGNLDPKITEYHLLKLLQKFGKVKQFDFLFHKSGALEGQPRGYCFVNFETKQEAEQAIQCLNGKLALSKKLVVRWAHAQVKRYDHNKNDKILPISLEPSSSTEPTQSNLSVTAKIKAIEAKLKMMAENPDAEYPAAPVYSYFKPPDKKRTTPYSRTAWKSRR.

Residues 25-106 (HRLWIGNLDP…KKLVVRWAHA (82 aa)) enclose the RRM domain. The disordered stretch occupies residues 166–190 (VYSYFKPPDKKRTTPYSRTAWKSRR).

This is Probable RNA-binding protein 18 (RBM18) from Pongo abelii (Sumatran orangutan).